A 663-amino-acid chain; its full sequence is Protein MICRORCHIDIA 6 (663 aa).

The interval 1 to 77 (MSHDRSVNVS…PADDAGVTSS (77 aa)) is disordered. The span at 49–62 (SVGQSAGQSSTSVV) shows a compositional bias: polar residues. The Nuclear localization signal motif lies at 552–559 (KRKEHPDS). Positions 614 to 659 (DRKVRSQNLEVKAMNLRSELENYKSEYERLMVELQALDLVKDEHRR) form a coiled coil.

It belongs to the MORC ATPase protein family. In terms of assembly, homodimer and heterodimers with MORC1/CRT1 and MORC2. Interacts directly with SUVH9. Component of an RNA-directed DNA methylation (RdDM) complex that contains at least MORC6, MORC1/CRT1, MORC2, SWI3D and SUVH9. Stimulated by interaction with DMS3. Interacts with IDN2, SWI3B, SWI3C and SWI3D. Requires Mg(2+) as cofactor. Mn(2+) serves as cofactor.

It localises to the nucleus. Stimulated by DMS3. Involved in RNA-directed DNA methylation (RdDM) as a component of the RdDM machinery and required for gene silencing. Together with SUVH2 and SUVH9, regulates the silencing of some transposable elements (TEs). Exhibits ATPase activity. May also be involved in the regulation of chromatin architecture/condensation to maintain gene silencing. Binds DNA/RNA in a non-specific manner and exhibits endonuclease activity. Probably involved in DNA repair. Positive regulator of defense against the oomycete Hyaloperonospora arabidopsidis (Hpa). The protein is Protein MICRORCHIDIA 6 of Arabidopsis thaliana (Mouse-ear cress).